The chain runs to 180 residues: Large ribosomal subunit protein uL6 (180 aa).

Belongs to the universal ribosomal protein uL6 family. As to quaternary structure, part of the 50S ribosomal subunit.

In terms of biological role, this protein binds to the 23S rRNA, and is important in its secondary structure. It is located near the subunit interface in the base of the L7/L12 stalk, and near the tRNA binding site of the peptidyltransferase center. The sequence is that of Large ribosomal subunit protein uL6 from Flavobacterium johnsoniae (strain ATCC 17061 / DSM 2064 / JCM 8514 / BCRC 14874 / CCUG 350202 / NBRC 14942 / NCIMB 11054 / UW101) (Cytophaga johnsonae).